The sequence spans 354 residues: Uroporphyrinogen decarboxylase (354 aa).

Substrate contacts are provided by residues 27–31, Asp77, Tyr154, Thr209, and His327; that span reads RQAGR.

This sequence belongs to the uroporphyrinogen decarboxylase family. In terms of assembly, homodimer.

The protein localises to the cytoplasm. It catalyses the reaction uroporphyrinogen III + 4 H(+) = coproporphyrinogen III + 4 CO2. Its pathway is porphyrin-containing compound metabolism; protoporphyrin-IX biosynthesis; coproporphyrinogen-III from 5-aminolevulinate: step 4/4. Functionally, catalyzes the decarboxylation of four acetate groups of uroporphyrinogen-III to yield coproporphyrinogen-III. In Salmonella agona (strain SL483), this protein is Uroporphyrinogen decarboxylase.